Here is a 559-residue protein sequence, read N- to C-terminus: Putative ankyrin repeat protein RBE_0902 (559 aa).

ANK repeat units lie at residues 11 to 40 (DGWT…EQAI), 46 to 75 (DGNT…DQAI), 81 to 110 (DGNT…TKQN), 158 to 189 (DDWT…VINH), 228 to 257 (NNDT…DQAI), 263 to 292 (DGNT…DQAI), 298 to 327 (YGNT…EQAI), 333 to 364 (QCDT…AINC), 372 to 402 (FGFT…EVII), and 524 to 554 (IDNN…WGLE).

The sequence is that of Putative ankyrin repeat protein RBE_0902 from Rickettsia bellii (strain RML369-C).